A 669-amino-acid chain; its full sequence is DNA ligase (669 aa).

NAD(+) contacts are provided by residues 33–37, 82–83, and glutamate 114; these read DAEYD and SL. The N6-AMP-lysine intermediate role is filled by lysine 116. Arginine 137, glutamate 174, lysine 291, and lysine 315 together coordinate NAD(+). Zn(2+)-binding residues include cysteine 409, cysteine 412, cysteine 427, and cysteine 433. The 77-residue stretch at 593 to 669 folds into the BRCT domain; sequence EIPQPLAGKV…QTEQDLLALL (77 aa).

This sequence belongs to the NAD-dependent DNA ligase family. LigA subfamily. Requires Mg(2+) as cofactor. Mn(2+) serves as cofactor.

The enzyme catalyses NAD(+) + (deoxyribonucleotide)n-3'-hydroxyl + 5'-phospho-(deoxyribonucleotide)m = (deoxyribonucleotide)n+m + AMP + beta-nicotinamide D-nucleotide.. In terms of biological role, DNA ligase that catalyzes the formation of phosphodiester linkages between 5'-phosphoryl and 3'-hydroxyl groups in double-stranded DNA using NAD as a coenzyme and as the energy source for the reaction. It is essential for DNA replication and repair of damaged DNA. This chain is DNA ligase, found in Vibrio vulnificus (strain YJ016).